The following is a 180-amino-acid chain: Ribosome maturation factor RimM (180 aa).

The PRC barrel domain occupies Glu97–Leu176.

This sequence belongs to the RimM family. As to quaternary structure, binds ribosomal protein uS19.

The protein localises to the cytoplasm. Its function is as follows. An accessory protein needed during the final step in the assembly of 30S ribosomal subunit, possibly for assembly of the head region. Essential for efficient processing of 16S rRNA. May be needed both before and after RbfA during the maturation of 16S rRNA. It has affinity for free ribosomal 30S subunits but not for 70S ribosomes. The sequence is that of Ribosome maturation factor RimM from Helicobacter acinonychis (strain Sheeba).